A 348-amino-acid chain; its full sequence is NADH-ubiquinone oxidoreductase chain 2 (348 aa).

The next 11 helical transmembrane spans lie at 3–23 (PVVL…TFIG), 25–45 (HWLL…PLMI), 67–87 (SALL…WSLL), 95–115 (ATLV…HFWL), 118–138 (VLQG…KLAP), 149–171 (LNSN…GGLN), 178–198 (ILAY…HYSP), 203–223 (LNLA…KLFN), 240–260 (LSII…LSGF), 274–294 (DLAI…FFYL), and 324–344 (LILM…PTIF).

Belongs to the complex I subunit 2 family.

Its subcellular location is the mitochondrion inner membrane. It catalyses the reaction a ubiquinone + NADH + 5 H(+)(in) = a ubiquinol + NAD(+) + 4 H(+)(out). Its function is as follows. Core subunit of the mitochondrial membrane respiratory chain NADH dehydrogenase (Complex I) that is believed to belong to the minimal assembly required for catalysis. Complex I functions in the transfer of electrons from NADH to the respiratory chain. The immediate electron acceptor for the enzyme is believed to be ubiquinone. In Squalus acanthias (Spiny dogfish), this protein is NADH-ubiquinone oxidoreductase chain 2 (MT-ND2).